Here is a 113-residue protein sequence, read N- to C-terminus: MKITLSKRIGLLAFLLPCALALSTTVHAETNKLVIESGDSAQSRQHAAMEKEQWNDTRNLRQKVNKRTEKEWDKADAAFDNRDKCEQSANINAYWEPNTLRCLDRRTGRVITP.

Positions 1-28 are cleaved as a signal peptide; it reads MKITLSKRIGLLAFLLPCALALSTTVHA.

This sequence belongs to the UPF0482 family.

The protein is UPF0482 protein YnfB of Shigella flexneri serotype 5b (strain 8401).